The primary structure comprises 151 residues: RNA polymerase-binding transcription factor DksA (151 aa).

Residues 33 to 54 are a coiled coil; it reads NEAQLAHFRRILEAWRNQLRDE. 4 residues coordinate Zn(2+): Cys114, Cys117, Cys135, and Cys138. The segment at 114–138 adopts a dksA C4-type zinc-finger fold; sequence CESCGVEIGIRRLEARPTADLCIDC.

Belongs to the DksA family. As to quaternary structure, interacts directly with the RNA polymerase.

Its subcellular location is the cytoplasm. Its function is as follows. Transcription factor that acts by binding directly to the RNA polymerase (RNAP). Required for negative regulation of rRNA expression and positive regulation of several amino acid biosynthesis promoters. Also required for regulation of fis expression. This is RNA polymerase-binding transcription factor DksA from Escherichia coli O157:H7.